The chain runs to 634 residues: Probable sulfate transporter 3.5 (634 aa).

Residues 1-12 are compositionally biased toward polar residues; that stretch reads MENTITSSTSSP. Residues 1 to 25 are disordered; the sequence is MENTITSSTSSPKGRGVNFSTPRGF. The Cytoplasmic segment spans residues 1-81; the sequence is MENTITSSTS…KYDMQKLKYD (81 aa). A helical membrane pass occupies residues 82–102; the sequence is VLAGITITSLAVPQGISYAKL. The Extracellular portion of the chain corresponds to 103–104; the sequence is AS. A helical membrane pass occupies residues 105 to 125; that stretch reads IPPIIGLYSSFVPPFVYAVFG. At 126–130 the chain is on the cytoplasmic side; sequence SSNNL. The chain crosses the membrane as a helical span at residues 131–151; it reads AVGTVAACSLLIAETFGEEMI. Residues 152–158 lie on the Extracellular side of the membrane; the sequence is KNEPELY. The chain crosses the membrane as a helical span at residues 159–179; sequence LHLIFTATLITGLFQFAMGFL. Residues 180-195 are Cytoplasmic-facing; sequence RLGILVDFLSHSTITG. The chain crosses the membrane as a helical span at residues 196 to 216; that stretch reads FMGGTAIIILLQQLKGIFGLV. Topologically, residues 217 to 239 are extracellular; that stretch reads HFTHKTDVVSVLHSILDNRAEWK. A helical transmembrane segment spans residues 240 to 260; that stretch reads WQSTLAGVCFLVFLQSTRYIK. The Cytoplasmic portion of the chain corresponds to 261–265; it reads QRYPK. Residues 266 to 286 traverse the membrane as a helical segment; it reads LFWVSAMGPMVVVVVGCVVAY. Residues 287–321 lie on the Extracellular side of the membrane; sequence LVKGTAHGIATVGPLKKGLNPPSIQLLNFDSKYLG. A helical transmembrane segment spans residues 322-342; sequence MVFKAGIVTGLIALAEGIAIG. The Cytoplasmic segment spans residues 343–358; sequence RSFAVMKNEQTDGNKE. The chain crosses the membrane as a helical span at residues 359 to 379; sequence MIAFGLMNVIGSFTSCYLTTG. Residues 380–395 are Extracellular-facing; sequence PFSKTAVNYNAGTKTP. Residues 396 to 416 form a helical membrane-spanning segment; the sequence is MSNVVMGVCMMLVLLFLAPLF. The Cytoplasmic portion of the chain corresponds to 417–420; the sequence is SYTP. Residues 421 to 441 form a helical membrane-spanning segment; that stretch reads LVGLSAIIMSAMLGLINYEEM. The Extracellular segment spans residues 442-458; it reads YHLFKVDKFDFLVCMSA. Residues 459 to 479 traverse the membrane as a helical segment; sequence FFGVSFLSMDYGLIISVGFSI. Over 480–634 the chain is Cytoplasmic; it reads VRALLYVARP…FNLTTTKPEV (155 aa). In terms of domain architecture, STAS spans 508–623; sequence QYPASEEMLG…LSIDDAVQAC (116 aa).

This sequence belongs to the SLC26A/SulP transporter (TC 2.A.53) family.

It localises to the membrane. H(+)/sulfate cotransporter that may play a role in the regulation of sulfate assimilation. The chain is Probable sulfate transporter 3.5 (SULTR3;5) from Arabidopsis thaliana (Mouse-ear cress).